A 278-amino-acid polypeptide reads, in one-letter code: S-formylglutathione hydrolase YeiG (278 aa).

Residues Ser-145, Asp-223, and His-256 each act as charge relay system in the active site.

The protein belongs to the esterase D family.

It carries out the reaction S-formylglutathione + H2O = formate + glutathione + H(+). Functionally, serine hydrolase involved in the detoxification of formaldehyde. Hydrolyzes S-formylglutathione to glutathione and formate. This Shigella flexneri serotype 5b (strain 8401) protein is S-formylglutathione hydrolase YeiG (yeiG).